The following is a 778-amino-acid chain: Endonuclease MutS2 (778 aa).

Gly-328–Thr-335 serves as a coordination point for ATP. A Smr domain is found at Leu-702–Lys-777.

It belongs to the DNA mismatch repair MutS family. MutS2 subfamily. Homodimer. Binds to stalled ribosomes, contacting rRNA.

Endonuclease that is involved in the suppression of homologous recombination and thus may have a key role in the control of bacterial genetic diversity. In terms of biological role, acts as a ribosome collision sensor, splitting the ribosome into its 2 subunits. Detects stalled/collided 70S ribosomes which it binds and splits by an ATP-hydrolysis driven conformational change. Acts upstream of the ribosome quality control system (RQC), a ribosome-associated complex that mediates the extraction of incompletely synthesized nascent chains from stalled ribosomes and their subsequent degradation. Probably generates substrates for RQC. This chain is Endonuclease MutS2, found in Streptococcus pneumoniae (strain JJA).